A 234-amino-acid polypeptide reads, in one-letter code: 1-(5-phosphoribosyl)-5-[(5-phosphoribosylamino)methylideneamino] imidazole-4-carboxamide isomerase (234 aa).

Aspartate 9 serves as the catalytic Proton acceptor. Aspartate 131 acts as the Proton donor in catalysis.

This sequence belongs to the HisA/HisF family.

The protein resides in the cytoplasm. It carries out the reaction 1-(5-phospho-beta-D-ribosyl)-5-[(5-phospho-beta-D-ribosylamino)methylideneamino]imidazole-4-carboxamide = 5-[(5-phospho-1-deoxy-D-ribulos-1-ylimino)methylamino]-1-(5-phospho-beta-D-ribosyl)imidazole-4-carboxamide. The protein operates within amino-acid biosynthesis; L-histidine biosynthesis; L-histidine from 5-phospho-alpha-D-ribose 1-diphosphate: step 4/9. The sequence is that of 1-(5-phosphoribosyl)-5-[(5-phosphoribosylamino)methylideneamino] imidazole-4-carboxamide isomerase from Staphylococcus aureus (strain NCTC 8325 / PS 47).